A 583-amino-acid polypeptide reads, in one-letter code: Protein FMP25, mitochondrial (583 aa).

A mitochondrion-targeting transit peptide spans 1 to 25 (MSFRLFTRTSQRLPRLNWVSPIRRY). Residues 83–105 (AVGQGILILVVVGGLGTAYLRWP) traverse the membrane as a helical segment. RCC1 repeat units follow at residues 332 to 389 (KGQF…AIDK), 390 to 452 (TGEI…VTIR), 459 to 510 (DHHY…TETE), and 512 to 569 (ENEV…KEQR).

The protein localises to the mitochondrion membrane. The chain is Protein FMP25, mitochondrial (FMP25) from Saccharomyces cerevisiae (strain ATCC 204508 / S288c) (Baker's yeast).